The chain runs to 155 residues: FAD synthase (155 aa).

ATP is bound by residues 9-10 (TF), 14-17 (HPGH), and Asp-92.

The protein belongs to the archaeal FAD synthase family. Homodimer. A divalent metal cation is required as a cofactor.

The enzyme catalyses FMN + ATP + H(+) = FAD + diphosphate. Its pathway is cofactor biosynthesis; FAD biosynthesis; FAD from FMN: step 1/1. Its function is as follows. Catalyzes the transfer of the AMP portion of ATP to flavin mononucleotide (FMN) to produce flavin adenine dinucleotide (FAD) coenzyme. The protein is FAD synthase of Archaeoglobus profundus (strain DSM 5631 / JCM 9629 / NBRC 100127 / Av18).